A 227-amino-acid chain; its full sequence is Orotidine 5'-phosphate decarboxylase (227 aa).

Substrate contacts are provided by residues Asp-8, Lys-30, 57 to 66, Thr-116, Arg-177, Gln-186, Gly-206, and Arg-207; that span reads DLKFHDIPNT. Lys-59 acts as the Proton donor in catalysis.

Belongs to the OMP decarboxylase family. Type 1 subfamily. Homodimer.

The enzyme catalyses orotidine 5'-phosphate + H(+) = UMP + CO2. It participates in pyrimidine metabolism; UMP biosynthesis via de novo pathway; UMP from orotate: step 2/2. Its function is as follows. Catalyzes the decarboxylation of orotidine 5'-monophosphate (OMP) to uridine 5'-monophosphate (UMP). This Acinetobacter baylyi (strain ATCC 33305 / BD413 / ADP1) protein is Orotidine 5'-phosphate decarboxylase.